Consider the following 367-residue polypeptide: Glutamate 5-kinase (367 aa).

Residue lysine 10 coordinates ATP. Serine 50, aspartate 137, and asparagine 149 together coordinate substrate. ATP is bound by residues 169–170 and 211–217; these read TD and TGGMSTK. Residues 275 to 353 form the PUA domain; it reads AGIITIDAGA…QDIEQVLGYE (79 aa).

It belongs to the glutamate 5-kinase family.

It is found in the cytoplasm. The enzyme catalyses L-glutamate + ATP = L-glutamyl 5-phosphate + ADP. Its pathway is amino-acid biosynthesis; L-proline biosynthesis; L-glutamate 5-semialdehyde from L-glutamate: step 1/2. Catalyzes the transfer of a phosphate group to glutamate to form L-glutamate 5-phosphate. In Pasteurella multocida (strain Pm70), this protein is Glutamate 5-kinase.